The sequence spans 474 residues: ATP synthase subunit beta 2 (474 aa).

ATP is bound at residue 157-164; that stretch reads GGAGVGKT.

The protein belongs to the ATPase alpha/beta chains family. F-type ATPases have 2 components, CF(1) - the catalytic core - and CF(0) - the membrane proton channel. CF(1) has five subunits: alpha(3), beta(3), gamma(1), delta(1), epsilon(1). CF(0) has three main subunits: a(1), b(2) and c(9-12). The alpha and beta chains form an alternating ring which encloses part of the gamma chain. CF(1) is attached to CF(0) by a central stalk formed by the gamma and epsilon chains, while a peripheral stalk is formed by the delta and b chains.

The protein localises to the cell inner membrane. It catalyses the reaction ATP + H2O + 4 H(+)(in) = ADP + phosphate + 5 H(+)(out). Its function is as follows. Produces ATP from ADP in the presence of a proton gradient across the membrane. The catalytic sites are hosted primarily by the beta subunits. The protein is ATP synthase subunit beta 2 of Polaromonas naphthalenivorans (strain CJ2).